We begin with the raw amino-acid sequence, 281 residues long: Cis-2,3-dihydrobiphenyl-2,3-diol dehydrogenase (281 aa).

10-34 (ITGGASGLGRALVDRFVAEGARVAV) contacts NAD(+). S142 is a substrate binding site. Y155 serves as the catalytic Proton acceptor.

Belongs to the short-chain dehydrogenases/reductases (SDR) family. As to quaternary structure, homotetramer.

The catalysed reaction is (2R,3S)-3-phenylcyclohexa-3,5-diene-1,2-diol + NAD(+) = biphenyl-2,3-diol + NADH + H(+). It participates in xenobiotic degradation; biphenyl degradation; 2-hydroxy-2,4-pentadienoate and benzoate from biphenyl: step 2/4. The sequence is that of Cis-2,3-dihydrobiphenyl-2,3-diol dehydrogenase (bphB) from Comamonas testosteroni (Pseudomonas testosteroni).